The chain runs to 450 residues: ATP-dependent protease ATPase subunit HslU (450 aa).

Residues valine 29, glycine 71–glutamate 76, aspartate 261, glutamate 328, and arginine 400 contribute to the ATP site.

It belongs to the ClpX chaperone family. HslU subfamily. As to quaternary structure, a double ring-shaped homohexamer of HslV is capped on each side by a ring-shaped HslU homohexamer. The assembly of the HslU/HslV complex is dependent on binding of ATP.

It localises to the cytoplasm. Functionally, ATPase subunit of a proteasome-like degradation complex; this subunit has chaperone activity. The binding of ATP and its subsequent hydrolysis by HslU are essential for unfolding of protein substrates subsequently hydrolyzed by HslV. HslU recognizes the N-terminal part of its protein substrates and unfolds these before they are guided to HslV for hydrolysis. The chain is ATP-dependent protease ATPase subunit HslU from Rickettsia conorii (strain ATCC VR-613 / Malish 7).